Here is a 456-residue protein sequence, read N- to C-terminus: uncharacterized protein (456 aa).

The TRAM domain occupies 5–63; the sequence is LVKKGQQISLKIKRLGINGEGIGYYKKLIIFVPGALPKEEVTATITNVTPKFAEGTLQS. [4Fe-4S] cluster-binding residues include Cys-76, Cys-82, Cys-85, and Cys-165. Positions 289, 318, 339, and 387 each coordinate S-adenosyl-L-methionine. Cys-414 acts as the Nucleophile in catalysis.

This sequence belongs to the class I-like SAM-binding methyltransferase superfamily. RNA M5U methyltransferase family.

This is an uncharacterized protein from Enterococcus faecalis (strain ATCC 700802 / V583).